Consider the following 1376-residue polypeptide: Mediator of RNA polymerase II transcription subunit 23 (1376 aa).

The segment covering 1346-1369 (SNSSSVQQTSSASSPTAQSTAGAA) has biased composition (low complexity). The segment at 1346–1376 (SNSSSVQQTSSASSPTAQSTAGAAIPLSVTQ) is disordered.

This sequence belongs to the Mediator complex subunit 23 family. In terms of assembly, component of the Mediator complex.

The protein localises to the nucleus. In terms of biological role, component of the Mediator complex, a coactivator involved in the regulated transcription of nearly all RNA polymerase II-dependent genes. Mediator functions as a bridge to convey information from gene-specific regulatory proteins to the basal RNA polymerase II transcription machinery. Mediator is recruited to promoters by direct interactions with regulatory proteins and serves as a scaffold for the assembly of a functional preinitiation complex with RNA polymerase II and the general transcription factors. The protein is Mediator of RNA polymerase II transcription subunit 23 (med23) of Danio rerio (Zebrafish).